A 574-amino-acid chain; its full sequence is Polyamine aminopropyltransferase (574 aa).

7 consecutive transmembrane segments (helical) span residues 22–42, 55–75, 90–110, 144–164, 188–208, 209–229, and 237–257; these read VLLL…EYLL, AAIY…AFAA, LTVA…IGFG, LPYF…PLIA, IGAG…DIQL, AAAL…WRFW, and LLLA…IQGP. Residues 254–510 form a spermidine synthase region; that stretch reads IQGPSWEQQF…ATLDGKDAQH (257 aa). The region spanning 257 to 505 is the PABS domain; sequence PSWEQQFNNL…WGWSIATLDG (249 aa). An S-methyl-5'-thioadenosine-binding site is contributed by Gln-281. His-317 and Asp-341 together coordinate spermidine. Residues Asp-360 and 403–404 each bind S-methyl-5'-thioadenosine; that span reads DA. The active-site Proton acceptor is the Asp-424.

Belongs to the spermidine/spermine synthase family. Homodimer or homotetramer.

The protein localises to the cell membrane. It catalyses the reaction S-adenosyl 3-(methylsulfanyl)propylamine + putrescine = S-methyl-5'-thioadenosine + spermidine + H(+). The protein operates within amine and polyamine biosynthesis; spermidine biosynthesis; spermidine from putrescine: step 1/1. In terms of biological role, catalyzes the irreversible transfer of a propylamine group from the amino donor S-adenosylmethioninamine (decarboxy-AdoMet) to putrescine (1,4-diaminobutane) to yield spermidine. This chain is Polyamine aminopropyltransferase, found in Shewanella oneidensis (strain ATCC 700550 / JCM 31522 / CIP 106686 / LMG 19005 / NCIMB 14063 / MR-1).